A 203-amino-acid chain; its full sequence is Holliday junction branch migration complex subunit RuvA (203 aa).

Residues 1 to 64 are domain I; sequence MIGRLRGIIL…EDAQLLYGFN (64 aa). Residues 65-142 are domain II; sequence NKQERTLFKE…KGLHGDLFTP (78 aa). The tract at residues 143–154 is flexible linker; it reads AADLVLTSPASP. The domain III stretch occupies residues 155-203; it reads ATDDAEQEAVAALVALGYKPQEASRMVSKIARPDASSETLIREALRAAL.

It belongs to the RuvA family. As to quaternary structure, homotetramer. Forms an RuvA(8)-RuvB(12)-Holliday junction (HJ) complex. HJ DNA is sandwiched between 2 RuvA tetramers; dsDNA enters through RuvA and exits via RuvB. An RuvB hexamer assembles on each DNA strand where it exits the tetramer. Each RuvB hexamer is contacted by two RuvA subunits (via domain III) on 2 adjacent RuvB subunits; this complex drives branch migration. In the full resolvosome a probable DNA-RuvA(4)-RuvB(12)-RuvC(2) complex forms which resolves the HJ.

The protein resides in the cytoplasm. Its function is as follows. The RuvA-RuvB-RuvC complex processes Holliday junction (HJ) DNA during genetic recombination and DNA repair, while the RuvA-RuvB complex plays an important role in the rescue of blocked DNA replication forks via replication fork reversal (RFR). RuvA specifically binds to HJ cruciform DNA, conferring on it an open structure. The RuvB hexamer acts as an ATP-dependent pump, pulling dsDNA into and through the RuvAB complex. HJ branch migration allows RuvC to scan DNA until it finds its consensus sequence, where it cleaves and resolves the cruciform DNA. The sequence is that of Holliday junction branch migration complex subunit RuvA from Citrobacter koseri (strain ATCC BAA-895 / CDC 4225-83 / SGSC4696).